Reading from the N-terminus, the 173-residue chain is NADH-ubiquinone oxidoreductase chain 6 (173 aa).

5 helical membrane passes run 1-21, 25-45, 53-73, 87-107, and 139-159; these read MAYI…SVAS, PYFA…VLMG, LVLF…CAAL, VLGS…WFWG, and LGGG…LVVL.

It belongs to the complex I subunit 6 family.

The protein resides in the mitochondrion membrane. The enzyme catalyses a ubiquinone + NADH + 5 H(+)(in) = a ubiquinol + NAD(+) + 4 H(+)(out). In terms of biological role, core subunit of the mitochondrial membrane respiratory chain NADH dehydrogenase (Complex I) that is believed to belong to the minimal assembly required for catalysis. Complex I functions in the transfer of electrons from NADH to the respiratory chain. The immediate electron acceptor for the enzyme is believed to be ubiquinone. This Gadus morhua (Atlantic cod) protein is NADH-ubiquinone oxidoreductase chain 6 (MT-ND6).